The following is a 456-amino-acid chain: Ribonuclease inhibitor (456 aa).

Methionine 1 carries the N-acetylmethionine modification. 15 LRR repeats span residues 15-43 (WTEL…CKDI), 44-71 (GSAL…VHLV), 72-100 (LQGL…CGVL), 101-128 (PSTL…LRLL), 129-157 (CEGL…CEPL), 158-185 (ASVL…ARVL), 186-214 (GQGL…CKDL), 215-242 (CGIV…IAEL), 243-271 (CPGL…CRDL), 272-299 (CRVL…ARLL), 300-328 (CESL…CQHV), 329-356 (SLML…IQEL), 357-385 (CQAL…CSSL), 386-413 (ASLL…VLQL), and 414-442 (LGSL…EDRL). Position 86 is a phosphoserine (serine 86).

As to quaternary structure, forms high-affinity heterodimers with RNASE1, ANG and RNASE2.

It is found in the cytoplasm. The protein localises to the nucleus. Ribonuclease inhibitor which inhibits RNASE1, RNASE2 and angiogenin (ANG). May play a role in redox homeostasis. Required to inhibit the cytotoxic tRNA ribonuclease activity of ANG in the cytoplasm in absence of stress. Relocates to the nucleus in response to stress, relieving inhibition of ANG in the cytoplasm, and inhibiting the angiogenic activity of ANG in the nucleus. The polypeptide is Ribonuclease inhibitor (RNH1) (Sus scrofa (Pig)).